Reading from the N-terminus, the 600-residue chain is ATP-dependent RNA helicase DDX55 (600 aa).

Residues 9-37 (WESLPVPLHPQVLGALRELGFPYMTPVQS) carry the Q motif motif. Positions 40–223 (IPLFMRNKDV…RAGLRNPVRV (184 aa)) constitute a Helicase ATP-binding domain. 53-60 (AVTGSGKT) provides a ligand contact to ATP. Residues 171–174 (DEAD) carry the DEAD box motif. One can recognise a Helicase C-terminal domain in the interval 254-402 (KFNQLVHFLR…EMKPQRNTAD (149 aa)). Basic and acidic residues predominate over residues 500 to 513 (EQQRREKTENEGRR). Residues 500-550 (EQQRREKTENEGRRKFIKNKAWSKQKAKKEKKKKMNEKRKREEGSDIEDED) are disordered. A compositionally biased stretch (basic residues) spans 514–537 (KFIKNKAWSKQKAKKEKKKKMNEK). Residues 533 to 562 (KMNEKRKREEGSDIEDEDMEELLNDTRLLK) are important for nuclear localization. A phosphoserine mark is found at Ser544 and Ser594.

Belongs to the DEAD box helicase family. DDX55/SPB4 subfamily. Interacts with 28S rRNA. Interacts with double-stranded RNA substrates in vitro; the interaction stimulates ATPase activity.

The protein resides in the nucleus. The protein localises to the nucleoplasm. It catalyses the reaction ATP + H2O = ADP + phosphate + H(+). Functionally, probable ATP-binding RNA helicase. Has ATPase activity and is involved in the maturation of precursor large subunit rRNAs. In Homo sapiens (Human), this protein is ATP-dependent RNA helicase DDX55.